Here is a 119-residue protein sequence, read N- to C-terminus: Large ribosomal subunit protein uL18 (119 aa).

It belongs to the universal ribosomal protein uL18 family. Part of the 50S ribosomal subunit; part of the 5S rRNA/L5/L18/L25 subcomplex. Contacts the 5S and 23S rRNAs.

Its function is as follows. This is one of the proteins that bind and probably mediate the attachment of the 5S RNA into the large ribosomal subunit, where it forms part of the central protuberance. This is Large ribosomal subunit protein uL18 from Endomicrobium trichonymphae.